Reading from the N-terminus, the 550-residue chain is Hydroxylamine reductase (550 aa).

[2Fe-2S] cluster contacts are provided by C3, C6, C18, and C25. Residues H249, E273, C317, C405, C433, C458, E492, and K494 each coordinate hybrid [4Fe-2O-2S] cluster. C405 is modified (cysteine persulfide).

The protein belongs to the HCP family. It depends on [2Fe-2S] cluster as a cofactor. Hybrid [4Fe-2O-2S] cluster is required as a cofactor.

It is found in the cytoplasm. The catalysed reaction is A + NH4(+) + H2O = hydroxylamine + AH2 + H(+). Catalyzes the reduction of hydroxylamine to form NH(3) and H(2)O. This is Hydroxylamine reductase from Salmonella choleraesuis (strain SC-B67).